The primary structure comprises 195 residues: MPKVGMQPIRRQQLIEATLAAINDVGMHDASIVQIARRAGVSNGIISHYFRDKNGLLEATMRYLISHLGLAVKSRLLSLTENTPRARLRAIVQGNFDDSQTNSAAMKTWLAFWASSLHSPMLHRLQQVNDRRLYSNLCIEFSHCLPKDNARIAAKGLAGLIDGLWLRSALSHDAFNREEALSIAYDYIEQQLTRT.

One can recognise an HTH tetR-type domain in the interval 8–68 (PIRRQQLIEA…ATMRYLISHL (61 aa)). The segment at residues 31–50 (SIVQIARRAGVSNGIISHYF) is a DNA-binding region (H-T-H motif).

It participates in amine and polyamine biosynthesis; betaine biosynthesis via choline pathway [regulation]. Its function is as follows. Repressor involved in the biosynthesis of the osmoprotectant glycine betaine. It represses transcription of the choline transporter BetT and the genes of BetAB involved in the synthesis of glycine betaine. This Pectobacterium carotovorum subsp. carotovorum (strain PC1) protein is HTH-type transcriptional regulator BetI.